The primary structure comprises 446 residues: Methylenetetrahydrofolate--tRNA-(uracil-5-)-methyltransferase TrmFO (446 aa).

FAD is bound at residue 9–14; sequence GGGMAG.

This sequence belongs to the MnmG family. TrmFO subfamily. FAD is required as a cofactor.

The protein localises to the cytoplasm. The enzyme catalyses uridine(54) in tRNA + (6R)-5,10-methylene-5,6,7,8-tetrahydrofolate + NADH + H(+) = 5-methyluridine(54) in tRNA + (6S)-5,6,7,8-tetrahydrofolate + NAD(+). It catalyses the reaction uridine(54) in tRNA + (6R)-5,10-methylene-5,6,7,8-tetrahydrofolate + NADPH + H(+) = 5-methyluridine(54) in tRNA + (6S)-5,6,7,8-tetrahydrofolate + NADP(+). Catalyzes the folate-dependent formation of 5-methyl-uridine at position 54 (M-5-U54) in all tRNAs. The protein is Methylenetetrahydrofolate--tRNA-(uracil-5-)-methyltransferase TrmFO of Ruegeria sp. (strain TM1040) (Silicibacter sp.).